A 226-amino-acid polypeptide reads, in one-letter code: Agamous-like MADS-box protein AP3 (226 aa).

One can recognise an MADS-box domain in the interval 1–61 (MARGKIEIKR…GKLHEYISPS (61 aa)). The 91-residue stretch at 84 to 174 (YERMQENLKK…LHEFDARDRD (91 aa)) folds into the K-box domain.

As to expression, expressed during flower development in stamens and petals.

Its subcellular location is the nucleus. Functionally, probable transcription factor involved in flower development. In Vitis vinifera (Grape), this protein is Agamous-like MADS-box protein AP3.